We begin with the raw amino-acid sequence, 120 residues long: MNPPQGVTKTILRPGNGRDSPHTGDTVIIDYTGYLYDDTRGENEYFMGTQFDTSQGRGPLKTEIGVGKVILGWDKGVQQMTLGEKAILTISSDNGYGKRGFPGLIPPDSGLVLYVCSPAG.

The disordered stretch occupies residues 1–24 (MNPPQGVTKTILRPGNGRDSPHTG). A PPIase FKBP-type domain is found at 24–120 (GDTVIIDYTG…LVLYVCSPAG (97 aa)).

This sequence belongs to the FKBP-type PPIase family. FKBP1 subfamily.

It catalyses the reaction [protein]-peptidylproline (omega=180) = [protein]-peptidylproline (omega=0). Functionally, PPIases accelerate the folding of proteins. It catalyzes the cis-trans isomerization of proline imidic peptide bonds in oligopeptides. This Emericella nidulans (strain FGSC A4 / ATCC 38163 / CBS 112.46 / NRRL 194 / M139) (Aspergillus nidulans) protein is FK506-binding protein 1B (FKBP3).